Reading from the N-terminus, the 151-residue chain is Putative UPF0320 protein YFL063W (151 aa).

It belongs to the UPF0320 family.

The protein is Putative UPF0320 protein YFL063W of Saccharomyces cerevisiae (strain ATCC 204508 / S288c) (Baker's yeast).